A 453-amino-acid polypeptide reads, in one-letter code: Fibrinogen gamma chain (453 aa).

The signal sequence occupies residues 1 to 26; that stretch reads MSWSLHPRNLILYFYALLFLSSTCVA. A Phosphoserine; by FAM20C modification is found at Ser68. A glycan (N-linked (GlcNAc...) (complex) asparagine) is linked at Asn78. The region spanning 170–416 is the Fibrinogen C-terminal domain; that stretch reads QIHDITGKDC…KTTMKIIPFN (247 aa). A disulfide bridge links Cys179 with Cys208. The N-linked (GlcNAc...) asparagine; in variant Asahi glycan is linked to Asn334. Ca(2+) is bound by residues Asp344, Asp346, Phe348, and Gly350. A disulfide bridge links Cys352 with Cys365. The tract at residues 400-422 is gamma-chain polymerization, binding amino end of another fibrin alpha chain; sequence TRWYSMKKTTMKIIPFNRLTIGE. A platelet aggregation and Staphylococcus clumping region spans residues 423–437; that stretch reads GQQHHLGGAKQVRPE. Gln424 is covalently cross-linked (Isoglutamyl lysine isopeptide (Gln-Lys) (interchain with K-432)). Positions 424–453 are disordered; sequence QQHHLGGAKQVRPEHPAETEYDSLYPEDDL. Lys432 is covalently cross-linked (Isoglutamyl lysine isopeptide (Lys-Gln) (interchain with Q-424)). Acidic residues predominate over residues 442 to 453; sequence TEYDSLYPEDDL. A sulfotyrosine mark is found at Tyr444 and Tyr448.

In terms of assembly, heterohexamer; disulfide linked. Contains 2 sets of 3 non-identical chains (alpha, beta and gamma). The 2 heterotrimers are in head to head conformation with the N-termini in a small central domain. Conversion of fibrinogen to fibrin is triggered by thrombin, which cleaves fibrinopeptides A and B from alpha and beta chains, and thus exposes the N-terminal polymerization sites responsible for the formation of the soft clot. The soft clot is converted into the hard clot by factor XIIIA which catalyzes the epsilon-(gamma-glutamyl)lysine cross-linking between gamma chains (stronger) and between alpha chains (weaker) of different monomers. Post-translationally, sulfation of C-terminal tyrosines increases affinity for thrombin. Detected in blood plasma (at protein level).

The protein localises to the secreted. Its function is as follows. Together with fibrinogen alpha (FGA) and fibrinogen beta (FGB), polymerizes to form an insoluble fibrin matrix. Has a major function in hemostasis as one of the primary components of blood clots. In addition, functions during the early stages of wound repair to stabilize the lesion and guide cell migration during re-epithelialization. Was originally thought to be essential for platelet aggregation, based on in vitro studies using anticoagulated blood. However, subsequent studies have shown that it is not absolutely required for thrombus formation in vivo. Enhances expression of SELP in activated platelets via an ITGB3-dependent pathway. Maternal fibrinogen is essential for successful pregnancy. Fibrin deposition is also associated with infection, where it protects against IFNG-mediated hemorrhage. May also facilitate the antibacterial immune response via both innate and T-cell mediated pathways. This chain is Fibrinogen gamma chain (FGG), found in Homo sapiens (Human).